Reading from the N-terminus, the 480-residue chain is Ribulose bisphosphate carboxylase large chain (480 aa).

Positions 1-2 (MS) are excised as a propeptide. Proline 3 is modified (N-acetylproline). An N6,N6,N6-trimethyllysine modification is found at lysine 14. Substrate contacts are provided by asparagine 123 and threonine 173. Residue lysine 175 is the Proton acceptor of the active site. Lysine 177 is a binding site for substrate. Mg(2+) is bound by residues lysine 201, aspartate 203, and glutamate 204. Lysine 201 bears the N6-carboxylysine mark. Histidine 294 acts as the Proton acceptor in catalysis. Residues arginine 295, histidine 327, and serine 379 each coordinate substrate.

The protein belongs to the RuBisCO large chain family. Type I subfamily. Heterohexadecamer of 8 large chains and 8 small chains; disulfide-linked. The disulfide link is formed within the large subunit homodimers. Requires Mg(2+) as cofactor. In terms of processing, the disulfide bond which can form in the large chain dimeric partners within the hexadecamer appears to be associated with oxidative stress and protein turnover.

The protein resides in the plastid. The protein localises to the chloroplast. The catalysed reaction is 2 (2R)-3-phosphoglycerate + 2 H(+) = D-ribulose 1,5-bisphosphate + CO2 + H2O. The enzyme catalyses D-ribulose 1,5-bisphosphate + O2 = 2-phosphoglycolate + (2R)-3-phosphoglycerate + 2 H(+). In terms of biological role, ruBisCO catalyzes two reactions: the carboxylation of D-ribulose 1,5-bisphosphate, the primary event in carbon dioxide fixation, as well as the oxidative fragmentation of the pentose substrate in the photorespiration process. Both reactions occur simultaneously and in competition at the same active site. This chain is Ribulose bisphosphate carboxylase large chain, found in Alluaudia procera (Madagascan ocotillo).